The sequence spans 261 residues: 5-hmdU DNA kinase (261 aa).

The protein belongs to the thymidylate kinase family. 5-hmdU DNA kinase subfamily.

The enzyme catalyses 5-hydroxymethyl-dUMP in DNA + ATP = 5-phosphomethyl-dUMP in DNA + ADP + H(+). Its function is as follows. Phosphorylates 5-hydroxymethyluracil (5hmdU) into 5-phosphomethyl-2'-deoxyuridine (5- PmdU) on DNA as a step in the pathway leading to thymidine hypermodifications in the viral genome. As a final result of the pathway of hypermodification, 5-Nalpha-putrescinylthymidine (Nalpha-PutT) substitutes for about 50% of thymidines in the viral DNA. These modifications probably prevent degradation of viral genome by the host restriction-modification antiviral defense system. The sequence is that of 5-hmdU DNA kinase from Delftia phage PhiW-14 (Deftia acidovorans bacteriophage phiW-14).